Reading from the N-terminus, the 214-residue chain is Guanylate kinase (214 aa).

A Guanylate kinase-like domain is found at 6 to 192; it reads GTLYIISAPS…ALEDLKAIFR (187 aa). 13 to 20 contributes to the ATP binding site; sequence APSGAGKT.

It belongs to the guanylate kinase family.

The protein resides in the cytoplasm. It catalyses the reaction GMP + ATP = GDP + ADP. Its function is as follows. Essential for recycling GMP and indirectly, cGMP. The sequence is that of Guanylate kinase from Pseudomonas syringae pv. syringae (strain B728a).